A 199-amino-acid polypeptide reads, in one-letter code: 5'-deoxynucleotidase YfbR (199 aa).

Residues 18–19 (RW) and H33 each bind substrate. The HD domain occupies 30–142 (VSEHSLQVAM…VKQADALCAY (113 aa)). Positions 33, 68, and 69 each coordinate a divalent metal cation. Substrate is bound by residues D69, 77 to 80 (DLPT), and D137. D137 lines the a divalent metal cation pocket.

Belongs to the 5DNU family. Homodimer. The cofactor is a divalent metal cation.

The protein localises to the cytoplasm. It carries out the reaction a 2'-deoxyribonucleoside 5'-phosphate + H2O = a 2'-deoxyribonucleoside + phosphate. Its function is as follows. Catalyzes the strictly specific dephosphorylation of 2'-deoxyribonucleoside 5'-monophosphates. The polypeptide is 5'-deoxynucleotidase YfbR (Salmonella agona (strain SL483)).